A 344-amino-acid chain; its full sequence is Krueppel-like factor 3 (344 aa).

Residues 1–74 are repressor domain; the sequence is MLMFDPVPVK…TVNKRGSPPA (74 aa). Lys10 is covalently cross-linked (Glycyl lysine isopeptide (Lys-Gly) (interchain with G-Cter in SUMO)). The 9aaTAD; inactive motif lies at 60–68; that stretch reads EPVDLTVNK. Positions 61-65 match the CTBP-binding motif motif; that stretch reads PVDLT. The interval 66-111 is disordered; that stretch reads VNKRGSPPAAGGSPSSLKFPSHRRASPGLSMPSSSPPIKKYSPPSP. A Glycyl lysine isopeptide (Lys-Gly) (interchain with G-Cter in SUMO2) cross-link involves residue Lys68. 2 stretches are compositionally biased toward low complexity: residues 70 to 81 and 91 to 107; these read GSPPAAGGSPSS and SPGL…KKYS. Residues Ser71, Ser91, Ser100, Ser107, and Ser110 each carry the phosphoserine modification. Lys195 is covalently cross-linked (Glycyl lysine isopeptide (Lys-Gly) (interchain with G-Cter in SUMO2)). Lys197 is covalently cross-linked (Glycyl lysine isopeptide (Lys-Gly) (interchain with G-Cter in SUMO); alternate). A Glycyl lysine isopeptide (Lys-Gly) (interchain with G-Cter in SUMO2); alternate cross-link involves residue Lys197. A phosphoserine mark is found at Ser215, Ser223, and Ser249. The disordered stretch occupies residues 235-254; that stretch reads SVIVQPGKRPLPVESPDTQR. 3 consecutive C2H2-type zinc fingers follow at residues 259–283, 289–313, and 319–341; these read HRCD…RRTH, YKCT…FRKH, and FQCP…RKRH.

Belongs to the krueppel C2H2-type zinc-finger protein family. As to quaternary structure, monomer. In terms of processing, sumoylated with SUMO1. Sumoylation is enhanced by PIAS1, PIAS2alpha and PIAS2beta, and PIAS4, but not by Pc2. Enhances transcriptional repression, but has no effect on DNA binding. Sumoylation on Lys-197 is the major site. As to expression, in 8.5 day embryos, expressed in midbrain, anterior hindbrain and ventral forebrain. In 9 day embryos, expressed throughout ventral anterior half of embryo including midbrain-hindbrain junction, ventral midbrain, diencephalon and forebrain. At 10.5 days, distribution is more widespread with expression also found in developing limb buds. Widely expressed in the adult.

Its subcellular location is the nucleus. Functionally, binds to the CACCC box of erythroid cell-expressed genes. May play a role in hematopoiesis. This is Krueppel-like factor 3 (Klf3) from Mus musculus (Mouse).